The following is a 386-amino-acid chain: MQMADLEKKLENSVLPPLLKRELSEKILKEEISEEYLVDEIISETIRAYERTLVEPGEAVGVVAAQSIGEPGTQMTMRTFHYAGVAELNVTLGLPRMIEIVDARKEPSTPTMTIYLNDEFKGDREKASMVAKNIESTDVESVSEDISVDLINECITIVLNMHQLESRGLTVADVIESIKSKMKLKIEDHENVLNLKIKTPSLKALRKRLPKVRAIHLKGVQNIKRVIIRKEVDEYILYSEGSNIKEVFDIEGVDTTKTTTNNIVEIQDVLGIEAARNAIIYEMDATLGNQGLTVDKRHLMMVADLMCTDGVVKPIGRHGIGGEKASVLARAAFEETVKHLYSASMRGYVDELGGVVENIIVGKPIAMGTGCIDVCIDKKYEEGKEL.

This sequence belongs to the RNA polymerase beta' chain family. In terms of assembly, part of the RNA polymerase complex.

The protein resides in the cytoplasm. It carries out the reaction RNA(n) + a ribonucleoside 5'-triphosphate = RNA(n+1) + diphosphate. Functionally, DNA-dependent RNA polymerase (RNAP) catalyzes the transcription of DNA into RNA using the four ribonucleoside triphosphates as substrates. Forms part of the jaw domain. The polypeptide is DNA-directed RNA polymerase subunit Rpo1C (Methanococcus maripaludis (strain C7 / ATCC BAA-1331)).